Consider the following 278-residue polypeptide: Large ribosomal subunit protein uL2 (278 aa).

2 disordered regions span residues 1–59 and 222–278; these read MAIR…GGHK and RGAA…NKKR. Residues 16-27 are compositionally biased toward polar residues; sequence SSVSEFSEITRS. Basic residues-rich tracts occupy residues 45 to 59 and 269 to 278; these read VHGHITTRHKGGGHK and VRRRRPNKKR.

The protein belongs to the universal ribosomal protein uL2 family. Part of the 50S ribosomal subunit. Forms a bridge to the 30S subunit in the 70S ribosome.

Functionally, one of the primary rRNA binding proteins. Required for association of the 30S and 50S subunits to form the 70S ribosome, for tRNA binding and peptide bond formation. It has been suggested to have peptidyltransferase activity; this is somewhat controversial. Makes several contacts with the 16S rRNA in the 70S ribosome. The protein is Large ribosomal subunit protein uL2 of Corynebacterium urealyticum (strain ATCC 43042 / DSM 7109).